Here is a 162-residue protein sequence, read N- to C-terminus: uncharacterized protein (162 aa).

The first 18 residues, 1–18 (MRKTFLTLLCVSSAIAHA), serve as a signal peptide directing secretion.

This sequence belongs to the fimbrial protein family.

Part of the yfcOPQRSUV fimbrial operon. Could contribute to adhesion to various surfaces in specific environmental niches. Increases adhesion to eukaryotic T24 bladder epithelial cells in the absence of fim genes. This is an uncharacterized protein from Escherichia coli (strain K12).